The sequence spans 421 residues: UDP-N-acetylglucosamine 1-carboxyvinyltransferase (421 aa).

Residue 26 to 27 participates in phosphoenolpyruvate binding; that stretch reads KN. R96 lines the UDP-N-acetyl-alpha-D-glucosamine pocket. The Proton donor role is filled by D120. Residues D308 and V330 each coordinate UDP-N-acetyl-alpha-D-glucosamine.

It belongs to the EPSP synthase family. MurA subfamily.

It localises to the cytoplasm. The enzyme catalyses phosphoenolpyruvate + UDP-N-acetyl-alpha-D-glucosamine = UDP-N-acetyl-3-O-(1-carboxyvinyl)-alpha-D-glucosamine + phosphate. The protein operates within cell wall biogenesis; peptidoglycan biosynthesis. Its function is as follows. Cell wall formation. Adds enolpyruvyl to UDP-N-acetylglucosamine. This chain is UDP-N-acetylglucosamine 1-carboxyvinyltransferase, found in Corynebacterium efficiens (strain DSM 44549 / YS-314 / AJ 12310 / JCM 11189 / NBRC 100395).